Here is a 346-residue protein sequence, read N- to C-terminus: Insertion element IS476 uncharacterized 39.2 kDa protein (346 aa).

Residues 1–50 form a disordered region; sequence MVSARPAFISGGPSTGGWRPTRQAAERTGGPEHSIEEVAGRGAPGHRSAE. A compositionally biased stretch (basic and acidic residues) spans 29–39; it reads GGPEHSIEEVA. Residues 169 to 329 enclose the Integrase catalytic domain; the sequence is ASSMPNDTWS…IPPAQFAANY (161 aa).

This Xanthomonas euvesicatoria protein is Insertion element IS476 uncharacterized 39.2 kDa protein.